Consider the following 493-residue polypeptide: Chitobiosyldiphosphodolichol beta-mannosyltransferase (493 aa).

Residues 1-71 are Lumenal-facing; it reads MNRVAVVVLG…PISMSNSFKK (71 aa). A helical transmembrane segment spans residues 72–92; it reads IPLISIFMWPLLAICKVLFQI. Over 93–109 the chain is Cytoplasmic; sequence IQLMYVLLVKVPSPLNT. The segment at residues 110–130 is an intramembrane region (helical); that stretch reads ILVQSPPAIPTIFVMQIVCWI. The Cytoplasmic portion of the chain corresponds to 131–493; the sequence is RGVHLVIDWH…SSSNSKSKKD (363 aa). Residues 462-493 are disordered; sequence FIPSSSSSSSSSSSSSSSSSSSSSSNSKSKKD. The span at 465-493 shows a compositional bias: low complexity; sequence SSSSSSSSSSSSSSSSSSSSSSNSKSKKD.

Belongs to the glycosyltransferase group 1 family. Glycosyltransferase 33 subfamily.

Its subcellular location is the endoplasmic reticulum membrane. It carries out the reaction an N,N'-diacetylchitobiosyl-diphospho-di-trans,poly-cis-dolichol + GDP-alpha-D-mannose = a beta-D-Man-(1-&gt;4)-beta-D-GlcNAc-(1-&gt;4)-alpha-D-GlcNAc-diphospho-di-trans,poly-cis-dolichol + GDP + H(+). Its pathway is protein modification; protein glycosylation. Its function is as follows. Participates in the formation of the lipid-linked precursor oligosaccharide for N-glycosylation. Involved in assembling the dolichol-pyrophosphate-GlcNAc(2)-Man(5) intermediate on the cytoplasmic surface of the ER. This is Chitobiosyldiphosphodolichol beta-mannosyltransferase (alg1) from Dictyostelium discoideum (Social amoeba).